A 335-amino-acid chain; its full sequence is Biotin synthase (335 aa).

Residues 47–276 (FYGKKVKLNM…SKEIRISGGR (230 aa)) enclose the Radical SAM core domain. C65, C69, and C72 together coordinate [4Fe-4S] cluster. Residues C109, C141, C201, and R271 each contribute to the [2Fe-2S] cluster site.

The protein belongs to the radical SAM superfamily. Biotin synthase family. As to quaternary structure, homodimer. It depends on [4Fe-4S] cluster as a cofactor. Requires [2Fe-2S] cluster as cofactor.

The catalysed reaction is (4R,5S)-dethiobiotin + (sulfur carrier)-SH + 2 reduced [2Fe-2S]-[ferredoxin] + 2 S-adenosyl-L-methionine = (sulfur carrier)-H + biotin + 2 5'-deoxyadenosine + 2 L-methionine + 2 oxidized [2Fe-2S]-[ferredoxin]. The protein operates within cofactor biosynthesis; biotin biosynthesis; biotin from 7,8-diaminononanoate: step 2/2. In terms of biological role, catalyzes the conversion of dethiobiotin (DTB) to biotin by the insertion of a sulfur atom into dethiobiotin via a radical-based mechanism. The protein is Biotin synthase of Bacillus subtilis subsp. natto.